The following is a 129-amino-acid chain: Large ribosomal subunit protein bL12c (129 aa).

It belongs to the bacterial ribosomal protein bL12 family. In terms of assembly, homodimer. Part of the ribosomal stalk of the 50S ribosomal subunit. Forms a multimeric L10(L12)X complex, where L10 forms an elongated spine to which 2 to 4 L12 dimers bind in a sequential fashion. Binds GTP-bound translation factors.

The protein resides in the plastid. Its subcellular location is the chloroplast. Functionally, forms part of the ribosomal stalk which helps the ribosome interact with GTP-bound translation factors. Is thus essential for accurate translation. In Porphyra purpurea (Red seaweed), this protein is Large ribosomal subunit protein bL12c.